The sequence spans 1240 residues: ABC transporter B family member 17 (1240 aa).

One can recognise an ABC transmembrane type-1 1 domain in the interval 35 to 324 (MALGLIGAVG…SLSNLKYFSE (290 aa)). The chain crosses the membrane as a helical span at residues 36 to 56 (ALGLIGAVGDGFITPVVVFIF). An N-linked (GlcNAc...) asparagine glycan is attached at Asn-70. Transmembrane regions (helical) follow at residues 81 to 101 (VVAL…EGYC), 158 to 180 (LPNF…ILMW), 184 to 206 (IVGF…ALVS), 264 to 284 (GITI…TWYG), and 296 to 316 (GTVF…GQSL). In terms of domain architecture, ABC transporter 1 spans 359-595 (VEFNHVKFTY…IDGQYTSLVS (237 aa)). An ATP-binding site is contributed by 394-401 (GGSGSGKS). N-linked (GlcNAc...) asparagine glycans are attached at residues Asn-542, Asn-609, and Asn-642. One can recognise an ABC transmembrane type-1 2 domain in the interval 672–960 (ALYGCLSAAL…AGTMTTDLAR (289 aa)). 2 consecutive transmembrane segments (helical) span residues 681 to 701 (LVGV…SVFF) and 714 to 734 (IYVL…ISQH). A glycan (N-linked (GlcNAc...) asparagine) is linked at Asn-769. 4 helical membrane-spanning segments follow: residues 793-815 (MSLL…VIAW), 817-839 (LAIV…RVLL), 896-919 (WLAG…NFWY), and 923-943 (LIAD…IFVT). The ABC transporter 2 domain maps to 995–1233 (ITFLNVDFAY…GPTGTYFSLA (239 aa)). An N-linked (GlcNAc...) asparagine glycan is attached at Asn-1015. Residue 1030 to 1037 (GTSGSGKS) coordinates ATP.

Belongs to the ABC transporter superfamily. ABCB family. Multidrug resistance exporter (TC 3.A.1.201) subfamily.

The protein resides in the membrane. The protein is ABC transporter B family member 17 (ABCB17) of Arabidopsis thaliana (Mouse-ear cress).